We begin with the raw amino-acid sequence, 530 residues long: Chondroitin sulfate N-acetylgalactosaminyltransferase 1 (530 aa).

Over methionine 1–arginine 12 the chain is Cytoplasmic. The helical; Signal-anchor for type II membrane protein transmembrane segment at valine 13–threonine 33 threads the bilayer. Over proline 34 to threonine 530 the chain is Lumenal. The stretch at alanine 57 to serine 93 forms a coiled coil. The interval serine 88–glycine 107 is disordered. Over residues phenylalanine 91–arginine 105 the composition is skewed to polar residues. Residues asparagine 313 and asparagine 322 are each glycosylated (N-linked (GlcNAc...) asparagine). The a divalent metal cation site is built by aspartate 358 and histidine 475.

The protein belongs to the chondroitin N-acetylgalactosaminyltransferase family.

Its subcellular location is the golgi apparatus. The protein localises to the golgi stack membrane. The enzyme catalyses 3-O-(beta-D-GlcA-(1-&gt;3)-beta-D-Gal-(1-&gt;3)-beta-D-Gal-(1-&gt;4)-beta-D-Xyl)-L-seryl-[protein] + UDP-N-acetyl-alpha-D-galactosamine = 3-O-(beta-D-GalNAc-(1-&gt;4)-beta-D-GlcA-(1-&gt;3)-beta-D-Gal-(1-&gt;3)-beta-D-Gal-(1-&gt;4)-beta-D-Xyl)-L-seryl-[protein] + UDP + H(+). Functionally, transfers 1,4-N-acetylgalactosamine (GalNAc) from UDP-GalNAc to the non-reducing end of glucuronic acid (GlcUA). Required for addition of the first GalNAc to the core tetrasaccharide linker and for elongation of chondroitin chains. Important role in chondroitin chain biosynthesis in cartilage formation, and subsequent endochondral ossification. Moreover, is involved in the metabolism of aggrecan. The sequence is that of Chondroitin sulfate N-acetylgalactosaminyltransferase 1 from Mus musculus (Mouse).